Here is a 374-residue protein sequence, read N- to C-terminus: Probable aminopeptidase YDR415C (374 aa).

Residues 1 to 18 (MRIQSLFVLFNVAIIAWS) form the signal peptide. Positions 177, 196, 235, 262, and 340 each coordinate Zn(2+).

This sequence belongs to the peptidase M28 family. M28E subfamily. Zn(2+) serves as cofactor.

This Saccharomyces cerevisiae (strain ATCC 204508 / S288c) (Baker's yeast) protein is Probable aminopeptidase YDR415C.